Here is a 245-residue protein sequence, read N- to C-terminus: Biosynthetic peptidoglycan transglycosylase (245 aa).

The chain crosses the membrane as a helical span at residues 20–42 (VYAGSVFAGAWLATQLFYLAQIA).

This sequence belongs to the glycosyltransferase 51 family.

The protein localises to the cell inner membrane. It catalyses the reaction [GlcNAc-(1-&gt;4)-Mur2Ac(oyl-L-Ala-gamma-D-Glu-L-Lys-D-Ala-D-Ala)](n)-di-trans,octa-cis-undecaprenyl diphosphate + beta-D-GlcNAc-(1-&gt;4)-Mur2Ac(oyl-L-Ala-gamma-D-Glu-L-Lys-D-Ala-D-Ala)-di-trans,octa-cis-undecaprenyl diphosphate = [GlcNAc-(1-&gt;4)-Mur2Ac(oyl-L-Ala-gamma-D-Glu-L-Lys-D-Ala-D-Ala)](n+1)-di-trans,octa-cis-undecaprenyl diphosphate + di-trans,octa-cis-undecaprenyl diphosphate + H(+). The protein operates within cell wall biogenesis; peptidoglycan biosynthesis. Peptidoglycan polymerase that catalyzes glycan chain elongation from lipid-linked precursors. The chain is Biosynthetic peptidoglycan transglycosylase from Burkholderia lata (strain ATCC 17760 / DSM 23089 / LMG 22485 / NCIMB 9086 / R18194 / 383).